We begin with the raw amino-acid sequence, 325 residues long: MSRSALVGNITAMLEDAGFLVSDRCAIRPKSFDVAARRGEDLVLLKILGNVDALDRMTGAEMRRLGGYLDATPLVIGVRTRDEDLKPNVVYFRHGVPVLSPDTAMDLFVEGVPPLIYAAPGGLYVNIDGDLLADEREERGWSLGRLATELGVSRRTVSKYEDGMNASIEIAIQLEEVFDEPFSSPLEVMEGAESVRDSEPTPDDPDPDADDEHVVHILTRAGFTVHPTARAPFKAVGEDDDNRRGVMSLLTGHSSFTKSAKKRARIMSSLGEVTQTRAVYFTETDAKRDAVKGTALVSCAELDAVDDPAAIRDLIRERSQKPTEA.

One can recognise an HTH cro/C1-type domain in the interval 132–186 (LADEREERGWSLGRLATELGVSRRTVSKYEDGMNASIEIAIQLEEVFDEPFSSPL). A DNA-binding region (H-T-H motif) is located at residues 143 to 162 (LGRLATELGVSRRTVSKYED). Residues 189 to 211 (MEGAESVRDSEPTPDDPDPDADD) form a disordered region. Residues 200–211 (PTPDDPDPDADD) are compositionally biased toward acidic residues.

The protein is Putative HTH-type transcriptional regulatory protein HQ_3058A of Haloquadratum walsbyi (strain DSM 16790 / HBSQ001).